The primary structure comprises 1642 residues: MERMALYLVAALLIGFPGSSHGALYTLITPAVLRTDTEEQILVEAHGDSTPKQLDIFVHDFPRKQKTLFQTRVDMNPAGGMLVTPTIEIPAKEVSTDSRQNQYVVVQVTGPQVRLEKVVLLSYQSSFLFIQTDKGIYTPGSPVLYRVFSMDHNTSKMNKTVIVEFQTPEGILVSSNSVDLNFFWPYNLPDLVSLGTWRIVAKYEHSPENYTAYFDVRKYVLPSFEVRLQPSEKFFYIDGNENFHVSITARYLYGEEVEGVAFVLFGVKIDDAKKSIPDSLTRIPIIDGDGKATLKRDTFRSRFPNLNELVGHTLYASVTVMTESGSDMVVTEQSGIHIVASPYQIHFTKTPKYFKPGMPYELTVYVTNPDGSPAAHVPVVSEAFHSMGTTLSDGTAKLILNIPLNAQSLPITVRTNHGDLPRERQATKSMTAIAYQTQGGSGNYLHVAITSTEIKPGDNLPVNFNVKGNANSLKQIKYFTYLILNKGKIFKVGRQPRRDGQNLVTMNLHITPDLIPSFRFVAYYQVGNNEIVADSVWVDVKDTCMGTLVVKGDNLIQMPGAAMKIKLEGDPGARVGLVAVDKAVYVLNDKYKISQAKIWDTIEKSDFGCTAGSGQNNLGVFEDAGLALTTSTNLNTKQRSAAKCPQPANRRRRSSVLLLDSNASKAAEFQDQDLRKCCEDVMHENPMGYTCEKRAKYIQEGDACKAAFLECCRYIKGVRDENQRESELFLARDDNEDGFIADSDIISRSDFPKSWLWLTKDLTEEPNSQGISSKTMSFYLRDSITTWVVLAVSFTPTKGICVAEPYEIRVMKVFFIDLQMPYSVVKNEQVEIRAILHNYVNEDIYVRVELLYNPAFCSASTKGQRYRQQFPIKALSSRAVPFVIVPLEQGLHDVEIKASVQEALWSDGVRKKLKVVPEGVQKSIVTIVKLDPRAKGVGGTQLEVIKARKLDDRVPDTEIETKIIIQGDPVAQIIENSIDGSKLNHLIITPSGCGEQNMIRMAAPVIATYYLDTTEQWETLGINRRTEAVNQIVTGYAQQMVYKKADHSYAAFTNRASSSWLTAYVVKVFAMAAKMVAGISHEIICGGVRWLILNRQQPDGAFKENAPVLSGTMQGGIQGAEEEVYLTAFILVALLESKTICNDYVNSLDSSIKKATNYLLKKYEKLQRPYTTALTAYALAAADQLNDDRVLMAASTGRDHWEEYNAHTHNIEGTSYALLALLKMKKFDQTGPIVRWLTDQNFYGETYGQTQATVMAFQALAEYEIQMPTHKDLNLDITIELPDREVPIRYRINYENALLARTVETKLNQDITVTASGDGKATMTILTFYNAQLQEKANVCNKFHLNVSVENIHLNAMGAKGALMLKICTRYLGEVDSTMTIIDISMLTGFLPDAEDLTRLSKGVDRYISRYEVDNNMAQKVAVIIYLNKVSHSEDECLHFKILKHFEVGFIQPGSVKVYSYYNLDEKCTKFYHPDKGTGLLNKICIGNVCRCAGETCSSLNHQERIDVPLQIEKACETNVDYVYKTKLLRIEEQDGNDIYVMDVLEVIKQGTDENPRAKTHQYISQRKCQEALNLKVNDDYLIWGSRSDLLPTKDKISYIITKNTWIERWPHEDECQEEEFQKLCDDFAQFSYTLTEFGCPT.

Residues 1–22 (MERMALYLVAALLIGFPGSSHG) form the signal peptide. 3 N-linked (GlcNAc...) asparagine glycosylation sites follow: asparagine 153, asparagine 158, and asparagine 209. Proline 516, aspartate 539, valine 540, and aspartate 542 together coordinate Mg(2+). 12 cysteine pairs are disulfide-bonded: cysteine 544-cysteine 801, cysteine 609-cysteine 644, cysteine 677-cysteine 704, cysteine 678-cysteine 711, cysteine 691-cysteine 712, cysteine 857-cysteine 1492, cysteine 1340-cysteine 1468, cysteine 1368-cysteine 1437, cysteine 1485-cysteine 1490, cysteine 1497-cysteine 1569, cysteine 1516-cysteine 1640, and cysteine 1616-cysteine 1625. A propeptide spanning residues 650-732 (RRRRSSVLLL…QRESELFLAR (83 aa)) is cleaved from the precursor. Residues 654–732 (SSVLLLDSNA…QRESELFLAR (79 aa)) are C3a-like domain. Residues 677–712 (CCEDVMHENPMGYTCEKRAKYIQEGDACKAAFLECC) enclose the Anaphylatoxin-like domain. The segment at 736–747 (EDGFIADSDIIS) is factor B binding site. A propeptide spanning residues 985–1263 (HLIITPSGCG…VMAFQALAEY (279 aa)) is cleaved from the precursor. Residues 985 to 1263 (HLIITPSGCG…VMAFQALAEY (279 aa)) form a C3d-like domain region. Positions 993–996 (CGEQ) form a cross-link, isoglutamyl cysteine thioester (Cys-Gln). The tract at residues 1190 to 1253 (VLMAASTGRD…GETYGQTQAT (64 aa)) is factor H binding site. N-linked (GlcNAc...) asparagine glycosylation is present at asparagine 1346. Residues 1497–1640 (CSSLNHQERI…FSYTLTEFGC (144 aa)) form the NTR domain.

The protein belongs to the venom complement C3 homolog family. Heterotrimer of alpha, beta and gamma chains; disulfide-linked. Is active with factor B in the presence of factor D. Post-translationally, first processed by the removal of 4 Arg residues by furin-type protease, forming two chains, alpha and gamma/beta precursor, linked by a disulfide bond. Probably, the cobrin cleaves the C3a-like domain and then the C3d-like domain, generating the mature cobra venom factor (CVF). This mature CVF is composed of three chains: alpha, gamma and beta. In terms of processing, contains 3 N-linked oligosaccharide chains, two in the alpha-chain and one in the beta-chain. Glycosylation is not required for the biological activity. However, it contributes to the immunogenicity of CVF. The carbohydrate content is 7.4. The major oligosaccharide is a symmetric fucosylated biantennary complex-type chain with an unusual alpha-galactosylated Le(x) structure at its non-reducing end. In terms of tissue distribution, expressed by the venom gland.

The protein localises to the secreted. Functionally, complement-activating protein in cobra venom. It is a structural and functional analog of complement component C3b, the activated form of C3. It binds factor B (CFB), which is subsequently cleaved by factor D (CFD) to form the bimolecular complex CVF/Bb. CVF/Bb is a C3/C5 convertase that cleaves both complement components C3 and C5. Structurally, it resembles the C3b degradation product C3c, which is not able to form a C3/C5 convertase. Unlike C3b/Bb, CVF/Bb is a stable complex and completely resistant to the actions of complement regulatory factors H (CFH) and I (CFI). Therefore, CVF continuously activates complement resulting in the depletion of complement activity. This is Cobra venom factor from Naja kaouthia (Monocled cobra).